A 148-amino-acid chain; its full sequence is Deoxyuridine 5'-triphosphate nucleotidohydrolase (148 aa).

Substrate-binding positions include 67–69, N80, 84–86, and M94; these read RSG and LID.

The protein belongs to the dUTPase family. Mg(2+) serves as cofactor.

The catalysed reaction is dUTP + H2O = dUMP + diphosphate + H(+). Its pathway is pyrimidine metabolism; dUMP biosynthesis; dUMP from dCTP (dUTP route): step 2/2. Its function is as follows. This enzyme is involved in nucleotide metabolism: it produces dUMP, the immediate precursor of thymidine nucleotides and it decreases the intracellular concentration of dUTP so that uracil cannot be incorporated into DNA. This chain is Deoxyuridine 5'-triphosphate nucleotidohydrolase, found in Ralstonia pickettii (strain 12J).